A 381-amino-acid polypeptide reads, in one-letter code: 1-deoxy-D-xylulose 5-phosphate reductoisomerase (381 aa).

Positions 13, 14, 15, 40, and 114 each coordinate NADPH. Lys-115 serves as a coordination point for 1-deoxy-D-xylulose 5-phosphate. An NADPH-binding site is contributed by Glu-116. Position 140 (Asp-140) interacts with Mn(2+). 1-deoxy-D-xylulose 5-phosphate is bound by residues Ser-141, Glu-142, Ser-166, and His-189. Position 142 (Glu-142) interacts with Mn(2+). Gly-195 lines the NADPH pocket. 1-deoxy-D-xylulose 5-phosphate-binding residues include Ser-202, Asn-207, Lys-208, and Glu-211. Mn(2+) is bound at residue Glu-211.

Belongs to the DXR family. It depends on Mg(2+) as a cofactor. Mn(2+) is required as a cofactor.

It catalyses the reaction 2-C-methyl-D-erythritol 4-phosphate + NADP(+) = 1-deoxy-D-xylulose 5-phosphate + NADPH + H(+). It functions in the pathway isoprenoid biosynthesis; isopentenyl diphosphate biosynthesis via DXP pathway; isopentenyl diphosphate from 1-deoxy-D-xylulose 5-phosphate: step 1/6. Its function is as follows. Catalyzes the NADPH-dependent rearrangement and reduction of 1-deoxy-D-xylulose-5-phosphate (DXP) to 2-C-methyl-D-erythritol 4-phosphate (MEP). This Treponema denticola (strain ATCC 35405 / DSM 14222 / CIP 103919 / JCM 8153 / KCTC 15104) protein is 1-deoxy-D-xylulose 5-phosphate reductoisomerase.